The sequence spans 350 residues: Protein disulfide isomerase Creld2 (350 aa).

The N-terminal stretch at 1 to 22 (MHLLLAAAFGLLLLLPPPGAVA) is a signal peptide. Positions 29-32 (CQRC) match the CXXC motif. Disulfide bonds link Cys29–Cys32, Cys138–Cys152, Cys146–Cys164, and Cys166–Cys175. The 43-residue stretch at 134 to 176 (DCQECQGGSERPCSGNGYCSGDGSRQGDGSCQCHTGYKGPLCI) folds into the EGF-like 1 domain. The FU 1 repeat unit spans residues 191 to 238 (HSICSACDESCKTCSGPSNKDCIQCEVGWARVEDACVDVDECAAETSP). Asn249 is a glycosylation site (N-linked (GlcNAc...) asparagine). One copy of the FU 2 repeat lies at 251 to 298 (SYTCEDCDSTCVGCTGKGPANCKECIAGYTKESGQCTDIDECSLEEKA). The CXXC motif lies at 261-264 (CVGC). 4 cysteine pairs are disulfide-bonded: Cys261-Cys264, Cys292-Cys306, Cys299-Cys315, and Cys317-Cys328. Residues 288–329 (DIDECSLEEKACKRKNENCYNVPGSFVCVCPEGFEETEDACV) form the EGF-like 2; calcium-binding domain.

The protein belongs to the CRELD family. Interacts with CHRNA4. Component of a complex containing at least CRELD2, MANF, MATN3 and PDIA4. Expressed in chondrocytes (at protein level).

The protein resides in the endoplasmic reticulum. The catalysed reaction is Catalyzes the rearrangement of -S-S- bonds in proteins.. Functionally, protein disulfide isomerase. Might play a role in the unfolded protein response. May regulate transport of alpha4-beta2 neuronal acetylcholine receptor. The chain is Protein disulfide isomerase Creld2 (Creld2) from Mus musculus (Mouse).